The sequence spans 564 residues: Agglutinin (564 aa).

Positions 1-24 (MYAVATWLCFGSTSGWSFTLEDNN) are cleaved as a signal peptide. 32–34 (IIN) is a binding site for beta-D-galactose. Asn-34 is a glycosylation site (N-linked (GlcNAc...) asparagine). Active-site residues include Tyr-104, Tyr-147, Glu-200, and Arg-203. Residues 104-105 (YV) and 145-147 (GNY) contribute to the AMP site. An N-linked (GlcNAc...) asparagine glycan is attached at Asn-259. Cys-282 and Cys-306 form a disulfide bridge. The propeptide at 291–302 (SLLIRPVVPNFN) is linker peptide. The 128-residue stretch at 309–436 (PEPIVRIVGR…YAVSQGWLPT (128 aa)) folds into the Ricin B-type lectin 1 domain. Residues Ile-312, 324-328 (DVTGE), Gln-337, Lys-342, and Asn-348 contribute to the beta-D-galactose site. One copy of the 1-alpha repeat lies at 319 to 361 (NGLCVDVTGEEFFDGNPIQLWPCKSNTDWNQLWTLRKDSTIRS). A disulfide bridge links Cys-322 with Cys-341. The stretch at 362 to 402 (NGKCLTISKSSPRQQVVIYNCSTATVGATRWQIWDNRTIIN) is one 1-beta repeat. Cys-365 and Cys-382 are joined by a disulfide. N-linked (GlcNAc...) asparagine glycans are attached at residues Asn-397 and Asn-437. The 1-gamma repeat unit spans residues 405 to 437 (SGLVLAATSGNSGTKLTVQTNIYAVSQGWLPTN). A beta-D-galactose-binding site is contributed by Asn-437. The 125-residue stretch at 439-563 (TQPFVTTIVG…GNLNQIWLPL (125 aa)) folds into the Ricin B-type lectin 2 domain. The 2-alpha repeat unit spans residues 450–485 (YGMCLQANSGKVWLEDCTSEKAEQQWALYADGSIRP). 2 disulfide bridges follow: Cys-453/Cys-466 and Cys-492/Cys-509. The stretch at 489–528 (RDNCLTTDANIKGTVVKILSCGPASSGQRWMFKNDGTILN) is one 2-beta repeat. The stretch at 531–558 (NGLVLDVRRSDPSLKQIIVHPFHGNLNQ) is one 2-gamma repeat.

It in the N-terminal section; belongs to the ribosome-inactivating protein family. Type 2 RIP subfamily.

The catalysed reaction is Endohydrolysis of the N-glycosidic bond at one specific adenosine on the 28S rRNA.. The polypeptide is Agglutinin (Ricinus communis (Castor bean)).